The primary structure comprises 449 residues: MDSDDLQVFQNELICCICVNYFIDPVTIDCGHSFCRPCLCLCSEEGRAPMRCPSCRKISEKPNFNTNVVLKKLSSLARQTRPQNINSSDNICVLHEETKELFCEADKRLLCGPCSESPEHMAHSHSPIGWAAEECREKLIKEMDYLWEINQETRNNLNQETRTFHSLKDYVSVRKRIITIQYQKMPIFLDEEEQRHLQALEREAEELFQQLQDSQVRMTQHLERMKDMYRELWETCHVPDVELLQDVRNVSARTDLAQMQKPQPVNPELTSWCITGVLDMLNNFRVDSALSTEMIPCYISLSEDVRYVIFGDDHLSAPTDPQGVDSFAVWGAQAFTSGKHYWEVDVTLSSNWILGVCQDSRTADANFVIDSDERFFLISSKRSNHYSLSTNSPPLIQYVQRPLGQVGVFLDYDNGSVSFFDVSKGSLIYGFPPSSFSSPLRPFFCFGCT.

An RING-type zinc finger spans residues 15 to 56 (CCICVNYFIDPVTIDCGHSFCRPCLCLCSEEGRAPMRCPSCR). Residues 87–128 (SSDNICVLHEETKELFCEADKRLLCGPCSESPEHMAHSHSPI) form a B box-type zinc finger. Zn(2+) is bound by residues C92, H95, C114, and H120. A coiled-coil region spans residues 189-225 (LDEEEQRHLQALEREAEELFQQLQDSQVRMTQHLERM). The 181-residue stretch at 269–449 (LTSWCITGVL…LRPFFCFGCT (181 aa)) folds into the B30.2/SPRY domain.

It belongs to the TRIM/RBCC family.

The chain is Tripartite motif-containing protein 64 (TRIM64) from Homo sapiens (Human).